The primary structure comprises 521 residues: Signal recognition particle protein (521 aa).

Residues 107 to 114 (GLQGSGKT), 196 to 200 (DTAGR), and 254 to 257 (TKLD) contribute to the GTP site. The segment at 436-505 (GGMGIPGMGR…MPDGLNELPP (70 aa)) is disordered. Positions 447-462 (SATRKSKGGKGKKRAR) are enriched in basic residues.

This sequence belongs to the GTP-binding SRP family. SRP54 subfamily. As to quaternary structure, part of the signal recognition particle protein translocation system, which is composed of SRP and FtsY.

It localises to the cytoplasm. The catalysed reaction is GTP + H2O = GDP + phosphate + H(+). Its function is as follows. Involved in targeting and insertion of nascent membrane proteins into the cytoplasmic membrane. Binds to the hydrophobic signal sequence of the ribosome-nascent chain (RNC) as it emerges from the ribosomes. The SRP-RNC complex is then targeted to the cytoplasmic membrane where it interacts with the SRP receptor FtsY. In Mycobacterium leprae (strain TN), this protein is Signal recognition particle protein.